Reading from the N-terminus, the 341-residue chain is Glyceraldehyde-3-phosphate dehydrogenase 2 (341 aa).

NAD(+) contacts are provided by residues 12–13 (RI), Arg78, and Thr120. Residues 152-154 (SCT) and Thr183 contribute to the D-glyceraldehyde 3-phosphate site. Cys153 acts as the Nucleophile in catalysis. Residue Asn184 participates in NAD(+) binding. D-glyceraldehyde 3-phosphate contacts are provided by residues Arg198, 211 to 212 (TG), and Arg234. Position 313 (Asn313) interacts with NAD(+).

This sequence belongs to the glyceraldehyde-3-phosphate dehydrogenase family. Homotetramer.

The protein localises to the cytoplasm. It catalyses the reaction D-glyceraldehyde 3-phosphate + phosphate + NAD(+) = (2R)-3-phospho-glyceroyl phosphate + NADH + H(+). It participates in carbohydrate degradation; glycolysis; pyruvate from D-glyceraldehyde 3-phosphate: step 1/5. Catalyzes the oxidative phosphorylation of glyceraldehyde 3-phosphate (G3P) to 1,3-bisphosphoglycerate (BPG) using the cofactor NAD. The first reaction step involves the formation of a hemiacetal intermediate between G3P and a cysteine residue, and this hemiacetal intermediate is then oxidized to a thioester, with concomitant reduction of NAD to NADH. The reduced NADH is then exchanged with the second NAD, and the thioester is attacked by a nucleophilic inorganic phosphate to produce BPG. This chain is Glyceraldehyde-3-phosphate dehydrogenase 2 (gapA2), found in Staphylococcus epidermidis (strain ATCC 35984 / DSM 28319 / BCRC 17069 / CCUG 31568 / BM 3577 / RP62A).